Consider the following 490-residue polypeptide: tRNA-guanine(15) transglycosylase (490 aa).

Catalysis depends on Asp90, which acts as the Nucleophile. Substrate contacts are provided by Asp125 and Ala193. Residues Cys276, Cys278, and Cys281 each coordinate Zn(2+).

Belongs to the archaeosine tRNA-ribosyltransferase family. It depends on Zn(2+) as a cofactor.

The catalysed reaction is guanosine(15) in tRNA + 7-cyano-7-deazaguanine = 7-cyano-7-carbaguanosine(15) in tRNA + guanine. It participates in tRNA modification; archaeosine-tRNA biosynthesis. Its function is as follows. Exchanges the guanine residue with 7-cyano-7-deazaguanine (preQ0) at position 15 in the dihydrouridine loop (D-loop) of archaeal tRNAs. This Methanosarcina mazei (strain ATCC BAA-159 / DSM 3647 / Goe1 / Go1 / JCM 11833 / OCM 88) (Methanosarcina frisia) protein is tRNA-guanine(15) transglycosylase.